Reading from the N-terminus, the 208-residue chain is FMN-dependent NADH:quinone oxidoreductase (208 aa).

FMN contacts are provided by residues 17-19, 99-102, and 143-146; these read SNS, MWNL, and SRGG.

It belongs to the azoreductase type 1 family. As to quaternary structure, homodimer. Requires FMN as cofactor.

The catalysed reaction is 2 a quinone + NADH + H(+) = 2 a 1,4-benzosemiquinone + NAD(+). The enzyme catalyses N,N-dimethyl-1,4-phenylenediamine + anthranilate + 2 NAD(+) = 2-(4-dimethylaminophenyl)diazenylbenzoate + 2 NADH + 2 H(+). In terms of biological role, quinone reductase that provides resistance to thiol-specific stress caused by electrophilic quinones. Also exhibits azoreductase activity. Catalyzes the reductive cleavage of the azo bond in aromatic azo compounds to the corresponding amines. In Staphylococcus haemolyticus (strain JCSC1435), this protein is FMN-dependent NADH:quinone oxidoreductase.